A 316-amino-acid polypeptide reads, in one-letter code: Ribosomal RNA small subunit methyltransferase H (316 aa).

S-adenosyl-L-methionine is bound by residues 35-37 (SGH), aspartate 55, phenylalanine 84, aspartate 105, and glutamine 112.

Belongs to the methyltransferase superfamily. RsmH family.

The protein localises to the cytoplasm. It carries out the reaction cytidine(1402) in 16S rRNA + S-adenosyl-L-methionine = N(4)-methylcytidine(1402) in 16S rRNA + S-adenosyl-L-homocysteine + H(+). Functionally, specifically methylates the N4 position of cytidine in position 1402 (C1402) of 16S rRNA. The polypeptide is Ribosomal RNA small subunit methyltransferase H (Streptococcus pyogenes serotype M4 (strain MGAS10750)).